The primary structure comprises 659 residues: Protein NEDD1 (659 aa).

WD repeat units lie at residues 1 to 31, 32 to 71, 75 to 114, 117 to 156, 160 to 200, 204 to 244, 246 to 285, and 289 to 332; these read MQENLRFASSGDDVKIWDASSMTLVDKFNPH, TAPHAISSVCWSSNNNFLVTASSSGDKIVVSSCKCKPVPL, GEGQKQTCVSLNSTSMYLVSGGLNNTVNIWDLKSKRVHRS, DHKDEVTCVTYNWNDCYIASGSLSGEIILHSVTTNLSSTP, GSNQ…PYHN, THKA…LVKT, VADAPLTAVDFMPDGATLAIGSSRGKIYQYDLRMLKSPIK, and AHKT…SAGG. Phosphothreonine; by PLK1 is present on Thr382. A disordered region spans residues 383–433; the sequence is LSKEAESGKNQDFSNFDDSGKSSLGDMFSPVRDDAVVSKGGDESIGKGDGL. At Ser411 the chain carries Phosphoserine. Positions 413-432 are enriched in basic and acidic residues; the sequence is VRDDAVVSKGGDESIGKGDG. A Phosphoserine; by PLK1 modification is found at Ser426. 2 positions are modified to phosphoserine: Ser468 and Ser515. A compositionally biased stretch (polar residues) spans 508-522; that stretch reads ETGNLNASPSSNQTR. The interval 508-531 is disordered; that stretch reads ETGNLNASPSSNQTRSPEKFEKPE. Position 549 is a phosphothreonine; by CDK1 (Thr549). Ser636 is modified (phosphoserine; by PLK1).

Interacts with FAM29A. Interacts with HSPA1A and HSPA1B. Interacts with gamma-tubulin in a HSPA1A/B-dependent manner. In terms of processing, during mitosis, prior phosphorylation on Thr-549 by CDK1 promotes subsequent phosphorylation by PLK1 on Thr-382, Ser-426 and Ser-636. Phosphorylated NEDD1 can interact with gamma-tubulin for targeting the gamma-tubulin ring complex (gTuRC) to the centrosome, an important step for spindle formation.

The protein resides in the cytoplasm. It localises to the cytoskeleton. It is found in the microtubule organizing center. The protein localises to the centrosome. Its function is as follows. Required for mitosis progression. Promotes the nucleation of microtubules from the spindle. This Bos taurus (Bovine) protein is Protein NEDD1 (NEDD1).